A 324-amino-acid chain; its full sequence is Fe-S cluster assembly protein dre2 (324 aa).

The N-terminal SAM-like domain stretch occupies residues 28 to 158 (GSPSKRTLLL…KMDQPKSFAI (131 aa)). The tract at residues 159 to 217 (PLRRNGKKKDAAKTETFAPAPAPAPPVQPVTVGMINNDDDYENDDDLIDEDTLLSDEDL) is linker. Positions 226, 237, 240, and 242 each coordinate [2Fe-2S] cluster. Residues 226-242 (CQPKPGRRRRACKDCTC) are fe-S binding site A. Cysteine 287, cysteine 290, cysteine 298, and cysteine 301 together coordinate [4Fe-4S] cluster. Short sequence motifs (cx2C motif) lie at residues 287–290 (CGNC) and 298–301 (CAGC). A fe-S binding site B region spans residues 287-301 (CGNCALGDAFRCAGC).

It belongs to the anamorsin family. Monomer. Interacts with tah18. Interacts with mia40. Requires [2Fe-2S] cluster as cofactor. [4Fe-4S] cluster is required as a cofactor.

The protein localises to the cytoplasm. The protein resides in the mitochondrion intermembrane space. In terms of biological role, component of the cytosolic iron-sulfur (Fe-S) protein assembly (CIA) machinery required for the maturation of extramitochondrial Fe-S proteins. Part of an electron transfer chain functioning in an early step of cytosolic Fe-S biogenesis, facilitating the de novo assembly of a [4Fe-4S] cluster on the scaffold complex cfd1-nbp35. Electrons are transferred to dre2 from NADPH via the FAD- and FMN-containing protein tah18. Tah18-dre2 are also required for the assembly of the diferric tyrosyl radical cofactor of ribonucleotide reductase (RNR), probably by providing electrons for reduction during radical cofactor maturation in the catalytic small subunit rnr2. The chain is Fe-S cluster assembly protein dre2 from Aspergillus niger (strain ATCC MYA-4892 / CBS 513.88 / FGSC A1513).